We begin with the raw amino-acid sequence, 278 residues long: Gasdermin-like protein het-Q1 (278 aa).

Belongs to the gasdermin family. As to quaternary structure, homooligomer; forms a homooligomeric ring-shaped pore complex when inserted in the membrane. The precursor form is cleaved by het-Q2, generating the pore-forming protein (Gasdermin-like protein het-Q1, N-terminal).

The protein localises to the cell membrane. Functionally, gasdermin-like protein involved in heterokaryon incompatibility, a process that ensures that during spontaneous vegetative cell fusion, only compatible cells from the same colony survive (non-self-recognition). In P.anserina, the het-q locus exists as 2 incompatible alleles, het-Q1 (this entry) and het-Q2 (AC P0DW09). This form constitutes the precursor of the pore-forming protein: during the allorecognition process, it is cleaved by het-Q2, releasing the N-terminal moiety (Gasdermin-like protein het-Q1, N-terminal) that binds to membranes and forms pores, triggering cell death. In terms of biological role, pore-forming protein that causes membrane permeabilization and cell death. Released upon cleavage and maturation by het-Q2 and binds to membrane inner leaflet lipids. Homooligomerizes within the membrane and forms pores of 10-15 nanometers (nm) of inner diameter, triggering cell death. In Podospora anserina (strain S / ATCC MYA-4624 / DSM 980 / FGSC 10383) (Pleurage anserina), this protein is Gasdermin-like protein het-Q1.